The chain runs to 384 residues: Galactokinase (384 aa).

Residue 34-37 (EHTD) participates in substrate binding. 123–129 (SSGLSSS) contacts ATP. Mg(2+)-binding residues include S129 and E161. The active-site Proton acceptor is D173. Y222 contributes to the substrate binding site.

It belongs to the GHMP kinase family. GalK subfamily.

The protein localises to the cytoplasm. The catalysed reaction is alpha-D-galactose + ATP = alpha-D-galactose 1-phosphate + ADP + H(+). It functions in the pathway carbohydrate metabolism; galactose metabolism. In terms of biological role, catalyzes the transfer of the gamma-phosphate of ATP to D-galactose to form alpha-D-galactose-1-phosphate (Gal-1-P). The protein is Galactokinase of Actinobacillus pleuropneumoniae serotype 5b (strain L20).